The primary structure comprises 156 residues: Small ribosomal subunit protein uS7 (156 aa).

This sequence belongs to the universal ribosomal protein uS7 family. In terms of assembly, part of the 30S ribosomal subunit. Contacts proteins S9 and S11.

One of the primary rRNA binding proteins, it binds directly to 16S rRNA where it nucleates assembly of the head domain of the 30S subunit. Is located at the subunit interface close to the decoding center, probably blocks exit of the E-site tRNA. The protein is Small ribosomal subunit protein uS7 of Pelobacter propionicus (strain DSM 2379 / NBRC 103807 / OttBd1).